The primary structure comprises 534 residues: Peptide chain release factor 3 (534 aa).

Residues S9–Q278 form the tr-type G domain. GTP contacts are provided by residues S18–T25, D86–H90, and N140–D143.

Belongs to the TRAFAC class translation factor GTPase superfamily. Classic translation factor GTPase family. PrfC subfamily.

It is found in the cytoplasm. Functionally, increases the formation of ribosomal termination complexes and stimulates activities of RF-1 and RF-2. It binds guanine nucleotides and has strong preference for UGA stop codons. It may interact directly with the ribosome. The stimulation of RF-1 and RF-2 is significantly reduced by GTP and GDP, but not by GMP. This chain is Peptide chain release factor 3, found in Stenotrophomonas maltophilia (strain K279a).